A 342-amino-acid polypeptide reads, in one-letter code: Dihydroorotase (342 aa).

Zn(2+) is bound by residues His13 and His15. Residues 15–17 and Asn41 each bind substrate; that span reads HLR. Lys98, His135, and His173 together coordinate Zn(2+). Residue Lys98 is modified to N6-carboxylysine. His135 lines the substrate pocket. Leu218 provides a ligand contact to substrate. Position 246 (Asp246) interacts with Zn(2+). Residue Asp246 is part of the active site. Substrate is bound by residues His250 and Ala262.

The protein belongs to the metallo-dependent hydrolases superfamily. DHOase family. Class II DHOase subfamily. As to quaternary structure, homodimer. It depends on Zn(2+) as a cofactor.

It catalyses the reaction (S)-dihydroorotate + H2O = N-carbamoyl-L-aspartate + H(+). It functions in the pathway pyrimidine metabolism; UMP biosynthesis via de novo pathway; (S)-dihydroorotate from bicarbonate: step 3/3. In terms of biological role, catalyzes the reversible cyclization of carbamoyl aspartate to dihydroorotate. This Vibrio parahaemolyticus serotype O3:K6 (strain RIMD 2210633) protein is Dihydroorotase.